The sequence spans 141 residues: Nucleoside diphosphate kinase (141 aa).

Residues lysine 9, phenylalanine 57, arginine 85, threonine 91, arginine 102, and asparagine 112 each contribute to the ATP site. Histidine 115 (pros-phosphohistidine intermediate) is an active-site residue.

The protein belongs to the NDK family. In terms of assembly, homotetramer. Mg(2+) is required as a cofactor.

It is found in the cytoplasm. The enzyme catalyses a 2'-deoxyribonucleoside 5'-diphosphate + ATP = a 2'-deoxyribonucleoside 5'-triphosphate + ADP. It carries out the reaction a ribonucleoside 5'-diphosphate + ATP = a ribonucleoside 5'-triphosphate + ADP. Functionally, major role in the synthesis of nucleoside triphosphates other than ATP. The ATP gamma phosphate is transferred to the NDP beta phosphate via a ping-pong mechanism, using a phosphorylated active-site intermediate. This chain is Nucleoside diphosphate kinase, found in Chlamydia felis (strain Fe/C-56) (Chlamydophila felis).